The sequence spans 58 residues: Large ribosomal subunit protein bL32 (58 aa).

It belongs to the bacterial ribosomal protein bL32 family.

The chain is Large ribosomal subunit protein bL32 from Thermobifida fusca (strain YX).